We begin with the raw amino-acid sequence, 416 residues long: MLNAQQFLNQFSLEAPLDESLYPIIRDICQEVKVHGDKALKMYNLTFDHTKTDHLEISHEQIKAAFDTLDEKTKQALQQSYERIKAYQESIKQTNQQLEESVECYEIYHPLESVGIYVPGGKASYPSTVLMTATLAQVAGVENIVVVTPPQPNGVSQEVLAACYITQVNQVFQVGGAQSIAALTYGTETIPKVDKIVGPGNQFVAYAKKYLFGQVGIDQIAGPTEIALIIDDTADLDAIVYDVFAQAEHDELARTYVIGEDAQVLKDLESRIAKALPNVDRYDIVSKSIANQHYLIHASNFDEACHVMNTIAPEHASIQTVNPQPYIEKVKYVGALFIGHYSPEVIGDYVAGPSHVLPTNRTARFTNGLSVNDFLTRNTVIHLSKDTFEQIADSAQHIAHVEALYNHQQSILIRQS.

The NAD(+) site is built by Tyr-117, Gln-178, and Asn-201. Thr-224, Gln-246, and His-249 together coordinate substrate. The Zn(2+) site is built by Gln-246 and His-249. Residues Glu-314 and His-315 each act as proton acceptor in the active site. Substrate is bound by residues His-315, Asp-348, Glu-402, and His-407. Asp-348 is a Zn(2+) binding site. His-407 contacts Zn(2+).

Belongs to the histidinol dehydrogenase family. Zn(2+) serves as cofactor.

The catalysed reaction is L-histidinol + 2 NAD(+) + H2O = L-histidine + 2 NADH + 3 H(+). The protein operates within amino-acid biosynthesis; L-histidine biosynthesis; L-histidine from 5-phospho-alpha-D-ribose 1-diphosphate: step 9/9. Catalyzes the sequential NAD-dependent oxidations of L-histidinol to L-histidinaldehyde and then to L-histidine. The protein is Histidinol dehydrogenase of Staphylococcus aureus (strain Mu50 / ATCC 700699).